We begin with the raw amino-acid sequence, 768 residues long: Disabled homolog 2 (768 aa).

The span at 1-16 (MSNEVETSTTNGQPDQ) shows a compositional bias: polar residues. Residues 1–36 (MSNEVETSTTNGQPDQQAAPKAPSKKEKKKGSEKTD) form a disordered region. At S2 the chain carries N-acetylserine. The residue at position 2 (S2) is a Phosphoserine. A PID domain is found at 45-196 (GDGVKYKAKL…KAEENGSEAL (152 aa)). Y170 carries the post-translational modification Phosphotyrosine. A Phosphoserine modification is found at S193. Residues 230 to 447 (ESRDILLVDL…KPGRGRRTAK (218 aa)) are required for localization to clathrin-coated pits. Residues 285 to 449 (NFFPTPNPDP…GRGRRTAKSS (165 aa)) are disordered. 2 consecutive short sequence motifs (DPF) follow at residues 293 to 295 (DPF) and 298 to 300 (DPF). Polar residues-rich tracts occupy residues 303–317 (PDQSAPSSFHSLTSA), 325–334 (GSLSTPQSKG), and 367–381 (PSSQTQQAVRTQNGV). S326 and S328 each carry phosphoserine; in mitosis. S401 bears the Phosphoserine mark. Positions 601–731 (TISTQSFPQP…GVLSGTKSAD (131 aa)) are sufficient for interaction with GRB2. The interval 619–627 (PPQPPPRNG) is required for interaction with CSK. The interval 649 to 768 (KEVKEMFKDF…HRSPFGNPFA (120 aa)) is required for interaction with MYO6. 2 disordered regions span residues 660 to 682 (LRQPPLVPSRKGETPSSGTSSAF) and 709 to 768 (NKIN…NPFA). The segment at 663–671 (PPLVPSRKG) is required for interaction with GRB2 and CSK. T673 is subject to Phosphothreonine. Position 675 is a phosphoserine (S675). Residues 708-724 (LNKINEPPKPAPRQGVL) are sufficient for interaction with SH3KBP1 SH3 domain. The span at 724–755 (LSGTKSADNSLENPFSKGFSSTNPSVVSQPAS) shows a compositional bias: polar residues. A phosphoserine mark is found at S729 and S761.

In terms of assembly, can interact (via PID domain) with LDLR, APP, APLP1 and APLP2, and weakly with INPP5D (via NPXY motifs); the interaction is impaired by tyrosine phosphorylation of the respective NPXY motifs. Can weakly interact (via PID domain) with LRP1 (via NPXY motif); the interaction is enhanced by tyrosine phosphorylation of the NPXY motif. Interacts with LRP2 (via NPXY motif); the interaction is not affected by tyrosine phosphorylation of the NPXY motif. Interacts with clathrin; in vitro can assemble clathrin triskelia into polyhedral coats. Interacts with AP2A2, ITGB1, ITGB3, ITGB5, PIAS2, DAB2IP, NOSTRIN, FCHO1, DVL3, EPS15, ITSN1 and EPS15L1. Interacts with SH3KBP1 (via SH3 domains). Interacts with GRB2; competes with SOS1 for binding to GRB2 and the interaction is enhanced by EGF and NT-3 stimulation. Interacts with MAP3K7; the interaction is induced by TGF-beta stimulation and may mediate TGF-beta stimulated JNK activation. Interacts with AXIN1 and PPP1CA; the interactions are mutually exclusive. Interacts with the globular tail of MYO6. Interacts (via DPF motifs) with FCHO2; the interaction is direct and required for DAB2-mediated LDLR endocytosis. Interacts with LRP6; the interaction involves LRP6 phosphorylation by CK2 and sequesters LRP6 towards clathrin-mediated endocytosis. Associates with the TGF-beta receptor complex. Interacts with SMAD2 and SMAD3; the interactions are enhanced upon TGF-beta stimulation. Interacts with GRB2; the interaction is enhanced by EGF and NT-3 stimulation. Interacts with SRC; the interaction is enhanced by EGF stimulation. Interacts with GRB2; the interaction is enhanced by EGF and NT-3 stimulation. Interacts (via NPXY motif) with DAB2 (via PID domain). In terms of processing, phosphorylated. Phosphorylation during mitosis is leading to membrane displacement. There is some ambiguity for the mitotic phosphosite Ser-326/328. Prostate.

It localises to the cytoplasm. The protein localises to the cytoplasmic vesicle. It is found in the clathrin-coated vesicle membrane. Its subcellular location is the membrane. The protein resides in the clathrin-coated pit. In terms of biological role, adapter protein that functions as a clathrin-associated sorting protein (CLASP) required for clathrin-mediated endocytosis of selected cargo proteins. Can bind and assemble clathrin, and binds simultaneously to phosphatidylinositol 4,5-bisphosphate (PtdIns(4,5)P2) and cargos containing non-phosphorylated NPXY internalization motifs, such as the LDL receptor, to recruit them to clathrin-coated pits. Can function in clathrin-mediated endocytosis independently of the AP-2 complex. Involved in endocytosis of integrin beta-1; this function seems to redundant with the AP-2 complex and seems to require DAB2 binding to endocytosis accessory EH domain-containing proteins such as EPS15, EPS15L1 and ITSN1. Involved in endocytosis of cystic fibrosis transmembrane conductance regulator/CFTR. Involved in endocytosis of megalin/LRP2 lipoprotein receptor during embryonal development. Required for recycling of the TGF-beta receptor. Involved in CFTR trafficking to the late endosome. Involved in several receptor-mediated signaling pathways. Involved in TGF-beta receptor signaling and facilitates phosphorylation of the signal transducer SMAD2. Mediates TFG-beta-stimulated JNK activation. May inhibit the canoniocal Wnt/beta-catenin signaling pathway by stabilizing the beta-catenin destruction complex through a competing association with axin preventing its dephosphorylation through protein phosphatase 1 (PP1). Sequesters LRP6 towards clathrin-mediated endocytosis, leading to inhibition of Wnt/beta-catenin signaling. May activate non-canonical Wnt signaling. In cell surface growth factor/Ras signaling pathways proposed to inhibit ERK activation by interrupting the binding of GRB2 to SOS1 and to inhibit SRC by preventing its activating phosphorylation at 'Tyr-419'. Proposed to be involved in modulation of androgen receptor (AR) signaling mediated by SRC activation; seems to compete with AR for interaction with SRC. Plays a role in the CSF-1 signal transduction pathway. Plays a role in cellular differentiation. Involved in cell positioning and formation of visceral endoderm (VE) during embryogenesis and proposed to be required in the VE to respond to Nodal signaling coming from the epiblast. Required for the epithelial to mesenchymal transition, a process necessary for proper embryonic development. May be involved in myeloid cell differentiation and can induce macrophage adhesion and spreading. May act as a tumor suppressor. The protein is Disabled homolog 2 (Dab2) of Rattus norvegicus (Rat).